A 596-amino-acid chain; its full sequence is Lamin-B2 (596 aa).

The disordered stretch occupies residues 1-20 (MASLPPHAGPATPLSPTRLS). Residues 1 to 26 (MASLPPHAGPATPLSPTRLSRLQEKE) form a head region. A Phosphothreonine modification is found at T12. Phosphoserine is present on S15. An IF rod domain is found at 24-380 (EKEELRELND…KLLEGEEERL (357 aa)). A coil 1A region spans residues 27–61 (ELRELNDRLAHYIDRVRALELENDRLLLRISEKEE). N6-acetyllysine; alternate is present on K59. Residue K59 forms a Glycyl lysine isopeptide (Lys-Gly) (interchain with G-Cter in SUMO2); alternate linkage. Residues 62 to 73 (VTTREVSGIKTL) are linker 1. A coil 1B region spans residues 74-207 (YESELADARR…AFSKSVFEEE (134 aa)). Glycyl lysine isopeptide (Lys-Gly) (interchain with G-Cter in SUMO2) cross-links involve residues K173 and K233. The interval 208–234 (VRETRRRHERRLVEVDSSRQQEYDFKM) is linker 2. A coil 2 region spans residues 235-378 (AQALEDLRSQ…YRKLLEGEEE (144 aa)). 2 positions are modified to phosphoserine: S294 and S385. Residues 376-440 (EEERLKLSPS…ASRVSSGSRL (65 aa)) form a disordered region. The interval 379-596 (RLKLSPSPSS…RTTSRGCRLM (218 aa)) is tail. Low complexity predominate over residues 382–403 (LSPSPSSRITISRATSSSSSSS). O-linked (GlcNAc) threonine glycosylation is present at T391. A phosphoserine mark is found at S398, S400, and S402. R413 is modified (omega-N-methylarginine). Residues 415-420 (KRRRLE) carry the Nuclear localization signal motif. Positions 425-439 (SGSPSRASRVSSGSR) are enriched in low complexity. One can recognise an LTD domain in the interval 438-559 (SRLAQQTVAT…VKAAKHSSVQ (122 aa)). K465 participates in a covalent cross-link: Glycyl lysine isopeptide (Lys-Gly) (interchain with G-Cter in SUMO2). S473 bears the Phosphoserine mark. The interval 552-596 (AAKHSSVQGRENGEEEEEEEAEFGEEDLFHQQGDPRTTSRGCRLM) is disordered. The span at 564-577 (GEEEEEEEAEFGEE) shows a compositional bias: acidic residues. Residues 585 to 596 (DPRTTSRGCRLM) show a composition bias toward polar residues. C593 carries the cysteine methyl ester modification. C593 is lipidated: S-farnesyl cysteine. Positions 594 to 596 (RLM) are cleaved as a propeptide — removed in mature form.

It belongs to the intermediate filament family. As to quaternary structure, dimer. Lamin dimers then assemble into dimeric head-to-tail polymers. Ultimately, two head-to-tail polymers assemble laterally into a protofilament with a uniformly shaped rod of 3.5 nm in diameter. Interacts with TMEM43. Post-translationally, B-type lamins undergo a series of modifications, such as farnesylation and phosphorylation. Increased phosphorylation of the lamins occurs before envelope disintegration and probably plays a role in regulating lamin associations. In terms of processing, phosphorylation plays a key role in lamin organization, subcellular localization and nuclear envelope disintegration. Phosphorylation by CDK1 at Ser-15 and Ser-385 at the onset of mitosis drives lamin disassembly and nuclear envelope breakdown. In terms of tissue distribution, germ cell-specific.

Its subcellular location is the nucleus lamina. Functionally, lamins are intermediate filament proteins that assemble into a filamentous meshwork, and which constitute the major components of the nuclear lamina, a fibrous layer on the nucleoplasmic side of the inner nuclear membrane. Lamins provide a framework for the nuclear envelope, bridging the nuclear envelope and chromatin, thereby playing an important role in nuclear assembly, chromatin organization, nuclear membrane and telomere dynamics. The structural integrity of the lamina is strictly controlled by the cell cycle, as seen by the disintegration and formation of the nuclear envelope in prophase and telophase, respectively. The sequence is that of Lamin-B2 (Lmnb2) from Mus musculus (Mouse).